We begin with the raw amino-acid sequence, 108 residues long: MPKKDRAQEAPSRDVPRPEEGQTICVVKKMLGGDHLIVLCMDGKERLARIPGKIRKKMWMREGDVVLVGIWDFQPNRCDILYKYGNDEIKRLVNENIISREVIDQLRG.

Positions 11-85 constitute an S1-like domain; sequence PSRDVPRPEE…NRCDILYKYG (75 aa).

This sequence belongs to the eIF-1A family.

Seems to be required for maximal rate of protein biosynthesis. Enhances ribosome dissociation into subunits and stabilizes the binding of the initiator Met-tRNA(I) to 40 S ribosomal subunits. In Saccharolobus solfataricus (strain ATCC 35092 / DSM 1617 / JCM 11322 / P2) (Sulfolobus solfataricus), this protein is Translation initiation factor 1A (eIF1A).